A 213-amino-acid polypeptide reads, in one-letter code: Maleamate amidohydrolase (213 aa).

Residue C154 is the Nucleophile of the active site.

This sequence belongs to the isochorismatase family.

It carries out the reaction maleamate + H2O = maleate + NH4(+). Its pathway is cofactor degradation; nicotinate degradation. In terms of biological role, maleamate amidase that transforms maleamate into maleate and ammonia in the aerobic nicotinate degradation pathway. The chain is Maleamate amidohydrolase (nicF) from Pseudomonas putida (strain ATCC 47054 / DSM 6125 / CFBP 8728 / NCIMB 11950 / KT2440).